Reading from the N-terminus, the 310-residue chain is tRNA-cytidine(32) 2-sulfurtransferase (310 aa).

The short motif at 48–53 (SGGKDS) is the PP-loop motif element. [4Fe-4S] cluster-binding residues include C123, C126, and C214.

It belongs to the TtcA family. In terms of assembly, homodimer. The cofactor is Mg(2+). It depends on [4Fe-4S] cluster as a cofactor.

The protein localises to the cytoplasm. The catalysed reaction is cytidine(32) in tRNA + S-sulfanyl-L-cysteinyl-[cysteine desulfurase] + AH2 + ATP = 2-thiocytidine(32) in tRNA + L-cysteinyl-[cysteine desulfurase] + A + AMP + diphosphate + H(+). Its pathway is tRNA modification. In terms of biological role, catalyzes the ATP-dependent 2-thiolation of cytidine in position 32 of tRNA, to form 2-thiocytidine (s(2)C32). The sulfur atoms are provided by the cysteine/cysteine desulfurase (IscS) system. This is tRNA-cytidine(32) 2-sulfurtransferase from Vibrio vulnificus (strain CMCP6).